The sequence spans 155 residues: Protein FAM162A (155 aa).

The interval 77–103 is required for proapoptotic activity; it reads RFKKEEEIPETISFEMLDAAKNKIRVK. Residues 102-121 form a helical membrane-spanning segment; the sequence is VKVSYLMIALTVAGCVYMVI.

Belongs to the UPF0389 family. In terms of assembly, interacts with HSP90AB1; HSP90AB1 is essential for FAM162A mitochondrial localization and pro-apoptotic activity. Interacts with VDAC2; the interaction is probably involved in inducing mitochondrial permeability transition.

Its subcellular location is the mitochondrion membrane. Functionally, proposed to be involved in regulation of apoptosis; the exact mechanism may differ between cell types/tissues. May be involved in hypoxia-induced cell death of transformed cells implicating cytochrome C release and caspase activation (such as CASP9) and inducing mitochondrial permeability transition. May be involved in hypoxia-induced cell death of neuronal cells probably by promoting release of AIFM1 from mitochondria to cytoplasm and its translocation to the nucleus; however, the involvement of caspases has been reported conflictingly. This chain is Protein FAM162A (Fam162a), found in Rattus norvegicus (Rat).